The primary structure comprises 323 residues: Germination protease (323 aa).

The propeptide occupies Met1–Asp6.

The protein belongs to the peptidase A25 family. As to quaternary structure, homotetramer. Autoproteolytically processed. The inactive tetrameric zymogen termed p46 autoprocesses to a smaller form termed p41, which is active only during spore germination.

It carries out the reaction Endopeptidase action with P4 Glu or Asp, P1 preferably Glu &gt; Asp, P1' hydrophobic and P2' Ala.. Initiates the rapid degradation of small, acid-soluble proteins during spore germination. In Clostridium tetani (strain Massachusetts / E88), this protein is Germination protease.